Here is a 490-residue protein sequence, read N- to C-terminus: Sporulation-specific protein 1 (490 aa).

In terms of domain architecture, Protein kinase spans 18-272 (YSIQSCIGRG…AYNLLSFEFV (255 aa)). ATP is bound by residues 24–32 (IGRGNFGDV) and Lys47. Asp141 functions as the Proton acceptor in the catalytic mechanism.

It belongs to the protein kinase superfamily. STE Ser/Thr protein kinase family. STE20 subfamily.

The protein resides in the nucleus. Its subcellular location is the cytoplasm. It catalyses the reaction L-seryl-[protein] + ATP = O-phospho-L-seryl-[protein] + ADP + H(+). It carries out the reaction L-threonyl-[protein] + ATP = O-phospho-L-threonyl-[protein] + ADP + H(+). In terms of biological role, serine/threonine protein kinase required for spore wall development. The chain is Sporulation-specific protein 1 (SPS1) from Saccharomyces cerevisiae (strain ATCC 204508 / S288c) (Baker's yeast).